A 496-amino-acid chain; its full sequence is Cytochrome P450 71D178 (496 aa).

A helical; Signal-anchor for type II membrane protein membrane pass occupies residues 1 to 21 (MDISISWVVIILLVLSYLILM). Cys435 is a heme binding site.

It belongs to the cytochrome P450 family. Heme serves as cofactor. As to expression, expressed in flowers, leaves and stems, especially in glandular trichomes.

The protein localises to the membrane. The enzyme catalyses (4S)-limonene + reduced [NADPH--hemoprotein reductase] + O2 = (1S,5R)-carveol + oxidized [NADPH--hemoprotein reductase] + H2O + H(+). It catalyses the reaction gamma-terpinene + 2 reduced [NADPH--hemoprotein reductase] + 2 O2 = carvacrol + 2 oxidized [NADPH--hemoprotein reductase] + 3 H2O + 2 H(+). The catalysed reaction is gamma-terpinene + 2 reduced [NADPH--hemoprotein reductase] + 2 O2 = thymol + 2 oxidized [NADPH--hemoprotein reductase] + 3 H2O + 2 H(+). It carries out the reaction (4R)-limonene + reduced [NADPH--hemoprotein reductase] + O2 = (1R,6S)-isopiperitenol + oxidized [NADPH--hemoprotein reductase] + H2O + H(+). The protein operates within secondary metabolite biosynthesis; terpenoid biosynthesis. Its function is as follows. Involved in the biosynthesis of phenolic monoterpenes natural products thymol and carvacrol which have a broad range of biological activities acting as antimicrobial compounds, insecticides, antioxidants and pharmaceutical agents. Catalyzes the C2- and C3-hydroxylation of gamma-terpinene to produce carvacrol and thymol, respectively. Also mediates the C6-hydroxylation of (4S)-limonene to form carveol and the C3-hydroxylation of (4R)-limonene to generate (+)-trans-isopiperitenol. This chain is Cytochrome P450 71D178, found in Origanum vulgare (Wild marjoram).